The following is a 382-amino-acid chain: Protein arginine N-methyltransferase PRMT10 (382 aa).

The tract at residues 1 to 21 (MASLPNGAASASAASSAAGGG) is disordered. Over residues 7 to 17 (GAASASAASSA) the composition is skewed to low complexity. The SAM-dependent MTase PRMT-type domain maps to 28 to 359 (EVDFANYFCT…KENHRLMDME (332 aa)). Active-site residues include Glu-142 and Glu-151. A dimerization arm region spans residues 189-229 (ENKMEDLEIAMHDWNLFVEDTESYYGVNMNVLTKAYRAEHE).

The protein belongs to the class I-like SAM-binding methyltransferase superfamily. Protein arginine N-methyltransferase family. Ring-like homodimer.

It catalyses the reaction L-arginyl-[protein] + 2 S-adenosyl-L-methionine = N(omega),N(omega)-dimethyl-L-arginyl-[protein] + 2 S-adenosyl-L-homocysteine + 2 H(+). Functionally, methylates (mono and asymmetric dimethylation) the guanidino nitrogens of arginyl residues in some proteins. The protein is Protein arginine N-methyltransferase PRMT10 (PRMT10) of Oryza sativa subsp. indica (Rice).